The following is a 237-amino-acid chain: Oligoribonuclease, mitochondrial (237 aa).

The N-terminal 25 residues, 1-25, are a transit peptide targeting the mitochondrion; sequence MLGVSLGARLLRGVGGRRGQFGARG. Residues 43–207 enclose the Exonuclease domain; sequence MVWVDLEMTG…DDISESIKEL (165 aa). 2 residues coordinate Mg(2+): Asp-47 and Glu-49. Ser-92 carries the post-translational modification Phosphoserine. Tyr-122 bears the Phosphotyrosine mark. Asp-147 is a Mg(2+) binding site. Position 173 is an N6-acetyllysine (Lys-173). Residue His-194 is part of the active site. Asp-199 contributes to the Mg(2+) binding site.

This sequence belongs to the oligoribonuclease family. As to quaternary structure, homodimer. Homotetramer. Mn(2+) is required as a cofactor. It depends on Mg(2+) as a cofactor.

It is found in the mitochondrion intermembrane space. The protein localises to the mitochondrion matrix. The protein resides in the mitochondrion. It localises to the cytoplasm. Its subcellular location is the nucleus. 3'-to-5'exoribonuclease that preferentially degrades DNA and RNA oligonucleotides composed of only two nucleotides. Binds and degrades longer oligonucleotides with a lower affinity. Plays dual roles in mitochondria, scavenging nanoRNAs (small RNA oligonucleotides of &lt;5 nucleotides) that are produced by the degradosome and clearing short RNAs that are generated by RNA processing. Essential for correct initiation of mitochondrial transcription, degrading mitochondrial RNA dinucleotides to prevent RNA-primed transcription at non-canonical sites in the mitochondrial genome. Essential for embryonic development. The chain is Oligoribonuclease, mitochondrial (Rexo2) from Mus musculus (Mouse).